Here is a 292-residue protein sequence, read N- to C-terminus: ATP synthase gamma chain (292 aa).

It belongs to the ATPase gamma chain family. F-type ATPases have 2 components, CF(1) - the catalytic core - and CF(0) - the membrane proton channel. CF(1) has five subunits: alpha(3), beta(3), gamma(1), delta(1), epsilon(1). CF(0) has three main subunits: a, b and c.

The protein resides in the cell inner membrane. In terms of biological role, produces ATP from ADP in the presence of a proton gradient across the membrane. The gamma chain is believed to be important in regulating ATPase activity and the flow of protons through the CF(0) complex. The sequence is that of ATP synthase gamma chain from Brucella canis (strain ATCC 23365 / NCTC 10854 / RM-666).